We begin with the raw amino-acid sequence, 201 residues long: Small ribosomal subunit protein uS4c (201 aa).

Residues 15–44 (LGALPGLTNKRPRAGSDLRNQSRSGKKSQY) form a disordered region. The S4 RNA-binding domain occupies 89–149 (MRLDNILFRL…DEQKSRALIQ (61 aa)).

Belongs to the universal ribosomal protein uS4 family. As to quaternary structure, part of the 30S ribosomal subunit. Contacts protein S5. The interaction surface between S4 and S5 is involved in control of translational fidelity.

It is found in the plastid. It localises to the chloroplast. Its function is as follows. One of the primary rRNA binding proteins, it binds directly to 16S rRNA where it nucleates assembly of the body of the 30S subunit. With S5 and S12 plays an important role in translational accuracy. The sequence is that of Small ribosomal subunit protein uS4c (rps4) from Helianthus annuus (Common sunflower).